The primary structure comprises 404 residues: Probable tRNA sulfurtransferase (404 aa).

Positions 60 to 165 constitute a THUMP domain; the sequence is QPIVEALKLV…DEAAYISYEE (106 aa). Residues 183 to 184, 208 to 209, R265, G287, and Q296 each bind ATP; these read ML and HF.

It belongs to the ThiI family.

The protein localises to the cytoplasm. The enzyme catalyses [ThiI sulfur-carrier protein]-S-sulfanyl-L-cysteine + a uridine in tRNA + 2 reduced [2Fe-2S]-[ferredoxin] + ATP + H(+) = [ThiI sulfur-carrier protein]-L-cysteine + a 4-thiouridine in tRNA + 2 oxidized [2Fe-2S]-[ferredoxin] + AMP + diphosphate. It catalyses the reaction [ThiS sulfur-carrier protein]-C-terminal Gly-Gly-AMP + S-sulfanyl-L-cysteinyl-[cysteine desulfurase] + AH2 = [ThiS sulfur-carrier protein]-C-terminal-Gly-aminoethanethioate + L-cysteinyl-[cysteine desulfurase] + A + AMP + 2 H(+). Its pathway is cofactor biosynthesis; thiamine diphosphate biosynthesis. Catalyzes the ATP-dependent transfer of a sulfur to tRNA to produce 4-thiouridine in position 8 of tRNAs, which functions as a near-UV photosensor. Also catalyzes the transfer of sulfur to the sulfur carrier protein ThiS, forming ThiS-thiocarboxylate. This is a step in the synthesis of thiazole, in the thiamine biosynthesis pathway. The sulfur is donated as persulfide by IscS. In Streptococcus pyogenes serotype M12 (strain MGAS2096), this protein is Probable tRNA sulfurtransferase.